Reading from the N-terminus, the 1845-residue chain is Collagen alpha-1(XXVII) chain (1845 aa).

A signal peptide spans 1-39 (MGTGFARGARGTAASGPGGGFLFAWILVSFTCHLASTQG). Residues 40–609 (APEDVDVLQR…LGPTPFPMLM (570 aa)) constitute a propeptide, N-terminal propeptide. One can recognise a Laminin G-like domain in the interval 72–237 (PSGFIFTQRA…NYCAHLRERC (166 aa)). N272 carries an N-linked (GlcNAc...) asparagine glycan. Disordered stretches follow at residues 299 to 478 (TKPL…VPKT), 502 to 572 (PPLG…RPST), 608 to 774 (LMGP…MGRP), and 827 to 1608 (LMGG…HPIQ). Residues 312–323 (HSSSQTPLSPAK) are compositionally biased toward polar residues. Low complexity-rich tracts occupy residues 327–343 (RKTP…NSTR) and 356–372 (TTTS…SVSP). A glycan (N-linked (GlcNAc...) asparagine) is linked at N340. Over residues 429–439 (PRPPVPSPQPL) the composition is skewed to pro residues. Polar residues predominate over residues 444 to 454 (GLSKKFTNPTV). A compositionally biased stretch (basic and acidic residues) spans 554 to 564 (SARDASPRDLT). 11 consecutive Collagen-like domains span residues 610–664 (GPPG…GDPG), 673–732 (GAKG…PGPV), 742–801 (GYIG…PGPP), 817–876 (GYPG…PGPL), 877–936 (GKAG…EGPM), 937–996 (GPPG…VGEK), 997–1038 (GDRG…PGSR), 1039–1096 (GLPG…GAKG), 1117–1176 (GSQG…PGLE), 1177–1236 (GDHG…QGEK), and 1240–1299 (GAKG…NGHK). A triple-helical region spans residues 610–1603 (GPPGSKGDCG…RGRPGPPGPP (994 aa)). Residues 639–654 (RGPPGPYGNPGPPGPP) are compositionally biased toward pro residues. Composition is skewed to low complexity over residues 677–690 (NMGL…PGPL) and 699–719 (PGAA…SPGA). Positions 865–874 (GLPGGRGKPG) are enriched in gly residues. Residues 896–909 (FPGDIGPPGDNGPE) are compositionally biased toward low complexity. Positions 1018–1027 (GTPGGIGNPG) are enriched in gly residues. Composition is skewed to low complexity over residues 1074–1086 (RGRP…QGAA), 1112–1122 (LPGEPGSQGPQ), and 1152–1167 (KGDL…QGLI). Basic and acidic residues-rich tracts occupy residues 1187–1212 (LKGD…KGED) and 1226–1238 (REGK…EKGQ). Composition is skewed to basic and acidic residues over residues 1311–1323 (KGEK…DGKT) and 1335–1345 (PVGDRGDRGEP). One can recognise a Collagen-like 12 domain in the interval 1325 to 1384 (GPPGPPGDRGPVGDRGDRGEPGDPGYPGQEGVQGLRGEPGQQGQPGHPGPRGRPGPKGSK). Low complexity-rich tracts occupy residues 1360 to 1369 (RGEPGQQGQP), 1395 to 1422 (KAGP…RQGP), and 1438 to 1465 (PGYQ…PGVA). Collagen-like domains lie at 1424 to 1483 (GTAG…SGLP), 1484 to 1543 (GQLG…KGIQ), and 1544 to 1603 (GPRG…PGPP). Residues 1557 to 1572 (IIGPPGMLGPSGLPGP) are compositionally biased toward low complexity. Residues 1588–1605 (RGPPGPRGRPGPPGPPWH) show a composition bias toward pro residues. Positions 1607–1845 (IQFQQDDLGA…RLEVGPACFL (239 aa)) are cleaved as a propeptide — C-terminal propeptide. In terms of domain architecture, Fibrillar collagen NC1 spans 1645–1845 (GEIFKTLHYL…RLEVGPACFL (201 aa)). 3 cysteine pairs are disulfide-bonded: C1675–C1707, C1716–C1843, and C1752–C1796. Positions 1693, 1695, 1698, and 1701 each coordinate Ca(2+). Residue N1754 is glycosylated (N-linked (GlcNAc...) asparagine).

The protein belongs to the fibrillar collagen family. Highly expressed in cartilage, eye and ear.

It localises to the secreted. It is found in the extracellular space. Its subcellular location is the extracellular matrix. Functionally, plays a role during the calcification of cartilage and the transition of cartilage to bone. The chain is Collagen alpha-1(XXVII) chain (Col27a1) from Mus musculus (Mouse).